The following is a 379-amino-acid chain: MQTSKQDNSNIKVIVGLSGGVDSSVTALLLKQQGYDVEGLFMKNWEGDDTEDYCPAAEDLKDVLAICEKLDIPLHVENFSGEYWDRVFEHFLAEYQSGRTPNPDILCNKEVKFKAFLEHAMTLGADYIATGHYARISRDENGQCYLLKGLDNNKDQSYFLYTLQQHQLSKSMFPIGELEKPYVRQLAEEADLITHDKKDSTGICFIGERKFKDFLQQFLPAQPGDIVNTEGEVIGHHEGLMYHTLGQRKGLGIGGGFGDSGLPWFSADKNLETNQLIAVQGSDHPLLNHAFLTADTCDWVSGHCPALKQALKAKVRYRQPEQPCQILSEKNGEIIVQFDEEQTAITPGQSVVFYEGETCLGGAIITGRYHSLSEINEDK.

ATP is bound by residues 16 to 23 (GLSGGVDS) and Met42. The interval 102–104 (NPD) is interaction with target base in tRNA. Residue Cys107 is the Nucleophile of the active site. Residues Cys107 and Cys204 are joined by a disulfide bond. Gly131 is a binding site for ATP. An interaction with tRNA region spans residues 154 to 156 (KDQ). Cys204 serves as the catalytic Cysteine persulfide intermediate. Residues 316–317 (RY) are interaction with tRNA.

Belongs to the MnmA/TRMU family.

It is found in the cytoplasm. The enzyme catalyses S-sulfanyl-L-cysteinyl-[protein] + uridine(34) in tRNA + AH2 + ATP = 2-thiouridine(34) in tRNA + L-cysteinyl-[protein] + A + AMP + diphosphate + H(+). Its function is as follows. Catalyzes the 2-thiolation of uridine at the wobble position (U34) of tRNA, leading to the formation of s(2)U34. The polypeptide is tRNA-specific 2-thiouridylase MnmA (Hydrogenovibrio crunogenus (strain DSM 25203 / XCL-2) (Thiomicrospira crunogena)).